We begin with the raw amino-acid sequence, 59 residues long: Putative zinc finger protein ORF59a (59 aa).

Residues 11–33 form a C2H2-type; degenerate zinc finger; that stretch reads YQCLRCGLTFRTKKQLIRHLVNT.

The protein is Putative zinc finger protein ORF59a of Acidianus hospitalis (AFV-1).